A 406-amino-acid polypeptide reads, in one-letter code: tRNA-specific 2-thiouridylase MnmA (406 aa).

ATP contacts are provided by residues 6 to 13 (AMSGGVDS) and L32. C101 acts as the Nucleophile in catalysis. A disulfide bond links C101 and C193. G125 is a binding site for ATP. The interval 143 to 145 (KDQ) is interaction with tRNA. The active-site Cysteine persulfide intermediate is the C193. Residues 378–406 (GAPIEEQPAPGTVGAVDADAIEQGEDAQR) form a disordered region. Residues 396–406 (DAIEQGEDAQR) are compositionally biased toward acidic residues.

It belongs to the MnmA/TRMU family.

It is found in the cytoplasm. The catalysed reaction is S-sulfanyl-L-cysteinyl-[protein] + uridine(34) in tRNA + AH2 + ATP = 2-thiouridine(34) in tRNA + L-cysteinyl-[protein] + A + AMP + diphosphate + H(+). Functionally, catalyzes the 2-thiolation of uridine at the wobble position (U34) of tRNA, leading to the formation of s(2)U34. The protein is tRNA-specific 2-thiouridylase MnmA of Corynebacterium urealyticum (strain ATCC 43042 / DSM 7109).